The sequence spans 207 residues: Ribosomal RNA small subunit methyltransferase G (207 aa).

S-adenosyl-L-methionine-binding positions include G77, F82, 100–102, and R141; that span reads ERS.

It belongs to the methyltransferase superfamily. RNA methyltransferase RsmG family.

Its subcellular location is the cytoplasm. In terms of biological role, specifically methylates the N7 position of a guanine in 16S rRNA. The sequence is that of Ribosomal RNA small subunit methyltransferase G from Borrelia turicatae (strain 91E135).